A 217-amino-acid chain; its full sequence is Adenylate kinase (217 aa).

10–15 lines the ATP pocket; that stretch reads GAGKGT. Residues 30–59 are NMP; sequence STGDMLRAAVKAGTPLGLEAKKVMDSGGLV. Residues Thr-31, Arg-36, 57–59, 85–88, and Gln-92 each bind AMP; these read GLV and GFPR. Residues 122–159 are LID; it reads GRRVHVASGRTYHVKFNPPKVAGVDDVTGEPLIQRDDD. Residues Arg-123 and 132–133 each bind ATP; that span reads TY. AMP contacts are provided by Arg-156 and Arg-167. Gly-203 is a binding site for ATP.

Belongs to the adenylate kinase family. As to quaternary structure, monomer.

It localises to the cytoplasm. The enzyme catalyses AMP + ATP = 2 ADP. It participates in purine metabolism; AMP biosynthesis via salvage pathway; AMP from ADP: step 1/1. In terms of biological role, catalyzes the reversible transfer of the terminal phosphate group between ATP and AMP. Plays an important role in cellular energy homeostasis and in adenine nucleotide metabolism. This is Adenylate kinase from Methylibium petroleiphilum (strain ATCC BAA-1232 / LMG 22953 / PM1).